The primary structure comprises 250 residues: Doublesex- and mab-3-related transcription factor dmd-3 (250 aa).

Residues 19–68 constitute a DNA-binding region (DM 1); it reads CQRCLNHGLREKRKNHKLSCTFRFCQCSNCIMVERRRQLNSRLMQIDGSR. A compositionally biased stretch (polar residues) spans 90 to 100; it reads CTSQSETTNES. Positions 90 to 115 are disordered; the sequence is CTSQSETTNESSGEDKDDGKPKERRP. Positions 102–115 are enriched in basic and acidic residues; the sequence is GEDKDDGKPKERRP. The DM 2 DNA-binding region spans 117-164; the sequence is CQRCAQHSVVNRLKGHKRACPFRDCFCAKCQVVVERQKLMADQIKLRR. Positions 166-201 are disordered; it reads QKREKNNLNSEREAPIAHSMTPSPIDTVTTTTTPTS. Positions 169–180 are enriched in basic and acidic residues; the sequence is EKNNLNSEREAP. The span at 186–201 shows a compositional bias: low complexity; it reads TPSPIDTVTTTTTPTS.

It belongs to the DMRT family. As to expression, in males, expressed in the tail tip. Specifically, expressed in 15 male-specific muscles of the tail tip called the diagonal muscles, and also in core body muscles of both males and hermaphrodites. In males, expressed in ray A-neurons. In males, expressed in PHC sensory neurons. In males, it is also expressed in the hindgut, B lineage and somatic gonad. In hermaphrodites, expressed in the anchor cell only.

Its subcellular location is the nucleus. The protein localises to the perikaryon. Transcriptional activator which promotes male-specific development. Acts partially redundantly with the transcription factor mab-3 to coordinate tail tip cell fusion and retraction and thereby regulate male tail tip morphogenesis. This is most likely through the regulation of downstream effectors such as eff-1. May also negatively regulate the expression of other proteins implicated in male tail morphogenesis including nhr-25, vav-1 and arl-1 in tail tip cells. In males, plays a role in the development of ray A-neurons by negatively regulating the activity of the transcription factor ast-1. Plays a role in the male-specific differentiation of PHC sensory neurons into densely connected hub sensory neurons. Plays a role in male mating behavior. In Caenorhabditis elegans, this protein is Doublesex- and mab-3-related transcription factor dmd-3.